The sequence spans 293 residues: Sec-independent protein translocase protein TatC (293 aa).

The next 6 membrane-spanning stretches (helical) occupy residues 35–55 (AAIA…QPFI), 87–107 (LLKV…LYQA), 123–143 (LFGF…ISYF), 173–193 (ILKF…LVGI), 204–224 (ILKS…LTAP), and 228–248 (IMMM…AIGI).

Belongs to the TatC family. In terms of assembly, the Tat system comprises two distinct complexes: a TatABC complex, containing multiple copies of TatA, TatB and TatC subunits, and a separate TatA complex, containing only TatA subunits. Substrates initially bind to the TatABC complex, which probably triggers association of the separate TatA complex to form the active translocon.

It localises to the cell membrane. Its function is as follows. Part of the twin-arginine translocation (Tat) system that transports large folded proteins containing a characteristic twin-arginine motif in their signal peptide across membranes. Together with TatB, TatC is part of a receptor directly interacting with Tat signal peptides. This Rothia mucilaginosa (strain DY-18) (Stomatococcus mucilaginosus) protein is Sec-independent protein translocase protein TatC.